The following is a 511-amino-acid chain: Lysine--tRNA ligase 2 (511 aa).

Residues 1–22 (MTMEINNTDPFEKMPLPDDSGL) are disordered. Residues Glu-421 and Glu-428 each coordinate Mg(2+).

The protein belongs to the class-II aminoacyl-tRNA synthetase family. As to quaternary structure, homodimer. Mg(2+) is required as a cofactor.

Its subcellular location is the cytoplasm. The catalysed reaction is tRNA(Lys) + L-lysine + ATP = L-lysyl-tRNA(Lys) + AMP + diphosphate. The sequence is that of Lysine--tRNA ligase 2 from Methanosarcina mazei (strain ATCC BAA-159 / DSM 3647 / Goe1 / Go1 / JCM 11833 / OCM 88) (Methanosarcina frisia).